Consider the following 963-residue polypeptide: VPS35 endosomal protein-sorting factor-like (963 aa).

Positions Ser-43–Pro-112 are disordered. Over residues Lys-51–Val-72 the composition is skewed to low complexity. At Ser-265 the chain carries Phosphoserine. Residues Ala-699–Phe-719 form a helical membrane-spanning segment.

The protein belongs to the VPS35L family. Component of the heterotrimeric retriever complex formed by VPS26C, VPS29 and VPS35L. Interacts with VPS29. Interacts with COMMD1, CCDC93 and CCDC22; associates with the CCC (COMMD/CCDC22/CCDC93) complex which contains at least COMMD1 (and possibly other COMM domain-containing proteins), CCDC22 and CCDC93. Interacts with WASHC1, WASHC2A and WASHC2C. Interacts with SNX17 and SNX31.

Its subcellular location is the membrane. It is found in the endosome. In terms of biological role, acts as a component of the retriever complex. The retriever complex is a heterotrimeric complex related to retromer cargo-selective complex (CSC) and essential for retromer-independent retrieval and recycling of numerous cargos such as integrin alpha-5/beta-1 (ITGA5:ITGB1). The recruitment of the retriever complex to the endosomal membrane involves CCC and WASH complexes. In the endosomes, drives the retrieval and recycling of NxxY-motif-containing cargo proteins by coupling to SNX17, a cargo essential for the homeostatic maintenance of numerous cell surface proteins associated with processes that include cell migration, cell adhesion, nutrient supply and cell signaling. Involved in copper-dependent ATP7A trafficking between the trans-Golgi network and vesicles in the cell periphery; the function is proposed to depend on its association with the CCC complex and cooperation with the WASH complex on early endosomes. Seems not to be required for CCC complex stability. The sequence is that of VPS35 endosomal protein-sorting factor-like from Mus musculus (Mouse).